The sequence spans 91 residues: Probable Fe(2+)-trafficking protein (91 aa).

Belongs to the Fe(2+)-trafficking protein family. Monomer.

Functionally, could be a mediator in iron transactions between iron acquisition and iron-requiring processes, such as synthesis and/or repair of Fe-S clusters in biosynthetic enzymes. The protein is Probable Fe(2+)-trafficking protein of Cronobacter sakazakii (strain ATCC BAA-894) (Enterobacter sakazakii).